A 211-amino-acid polypeptide reads, in one-letter code: Histone H1-beta, late embryonic (211 aa).

Disordered stretches follow at residues 1 to 22 (MAAE…PSSS) and 81 to 211 (KGAS…AAKK). One can recognise an H15 domain in the interval 17–91 (AHPSSSEMVL…GASGSFKLGK (75 aa)). 2 stretches are compositionally biased toward basic and acidic residues: residues 95–107 (GKSD…DAAK) and 114–123 (KKKEAKEKKA). Composition is skewed to basic residues over residues 124–177 (ARSK…KKAA) and 185–211 (KAAK…AAKK).

This sequence belongs to the histone H1/H5 family.

The protein resides in the nucleus. It is found in the chromosome. Its function is as follows. Histones H1 are necessary for the condensation of nucleosome chains into higher-order structures. The polypeptide is Histone H1-beta, late embryonic (Strongylocentrotus purpuratus (Purple sea urchin)).